Here is a 177-residue protein sequence, read N- to C-terminus: Large ribosomal subunit protein uL6 (177 aa).

The protein belongs to the universal ribosomal protein uL6 family. In terms of assembly, part of the 50S ribosomal subunit.

Functionally, this protein binds to the 23S rRNA, and is important in its secondary structure. It is located near the subunit interface in the base of the L7/L12 stalk, and near the tRNA binding site of the peptidyltransferase center. The sequence is that of Large ribosomal subunit protein uL6 from Pectobacterium atrosepticum (strain SCRI 1043 / ATCC BAA-672) (Erwinia carotovora subsp. atroseptica).